We begin with the raw amino-acid sequence, 391 residues long: Processive diacylglycerol beta-glucosyltransferase (391 aa).

Belongs to the glycosyltransferase 28 family. UgtP subfamily.

The protein resides in the cell membrane. The catalysed reaction is a 1,2-diacyl-3-O-(beta-D-glucopyranosyl)-sn-glycerol + UDP-alpha-D-glucose = a 1,2-diacyl-3-O-(beta-D-Glc-(1-&gt;6)-beta-D-Glc)-sn-glycerol + UDP + H(+). It carries out the reaction a 1,2-diacyl-sn-glycerol + UDP-alpha-D-glucose = a 1,2-diacyl-3-O-(beta-D-glucopyranosyl)-sn-glycerol + UDP + H(+). Its pathway is glycolipid metabolism; diglucosyl-diacylglycerol biosynthesis. In terms of biological role, processive glucosyltransferase involved in the biosynthesis of both the bilayer- and non-bilayer-forming membrane glucolipids. Is able to successively transfer two glucosyl residues to diacylglycerol (DAG), thereby catalyzing the formation of beta-monoglucosyl-DAG (3-O-(beta-D-glucopyranosyl)-1,2-diacyl-sn-glycerol) and beta-diglucosyl-DAG (3-O-(beta-D-glucopyranosyl-beta-(1-&gt;6)-D-glucopyranosyl)-1,2-diacyl-sn-glycerol). Beta-diglucosyl-DAG is the predominant glycolipid found in Bacillales and is also used as a membrane anchor for lipoteichoic acid (LTA). The chain is Processive diacylglycerol beta-glucosyltransferase from Staphylococcus aureus (strain MRSA252).